Consider the following 286-residue polypeptide: Undecaprenyl-diphosphatase (286 aa).

The next 7 helical transmembrane spans lie at G50–W70, M97–D117, L126–V146, L156–V176, S200–M220, L236–V256, and F264–I284.

This sequence belongs to the UppP family.

The protein localises to the cell membrane. The catalysed reaction is di-trans,octa-cis-undecaprenyl diphosphate + H2O = di-trans,octa-cis-undecaprenyl phosphate + phosphate + H(+). Catalyzes the dephosphorylation of undecaprenyl diphosphate (UPP). Confers resistance to bacitracin. The protein is Undecaprenyl-diphosphatase of Arthrobacter sp. (strain FB24).